A 226-amino-acid chain; its full sequence is Peroxiredoxin-like 2C (226 aa).

Residues 1–24 form a disordered region; sequence MAAPVTRQVSGCAGRVPSPAGSVT.

The protein belongs to the peroxiredoxin-like PRXL2 family. PRXL2C subfamily.

Its function is as follows. May positively regulate ERK1/2 signaling and AKT1 activation leading to HIF1A up-regulation with an increased expression of glycolysis genes and enhanced glycolysis. In Mus musculus (Mouse), this protein is Peroxiredoxin-like 2C (Prxl2c).